The chain runs to 398 residues: 4-hydroxy-3-methylbut-2-enyl diphosphate reductase (398 aa).

Cys-66 is a binding site for [4Fe-4S] cluster. Position 96 (His-96) interacts with (2E)-4-hydroxy-3-methylbut-2-enyl diphosphate. His-96 provides a ligand contact to dimethylallyl diphosphate. Residue His-96 coordinates isopentenyl diphosphate. A [4Fe-4S] cluster-binding site is contributed by Cys-157. His-185 is a (2E)-4-hydroxy-3-methylbut-2-enyl diphosphate binding site. Residue His-185 coordinates dimethylallyl diphosphate. His-185 is a binding site for isopentenyl diphosphate. Glu-187 acts as the Proton donor in catalysis. Thr-250 provides a ligand contact to (2E)-4-hydroxy-3-methylbut-2-enyl diphosphate. Residue Cys-288 coordinates [4Fe-4S] cluster. Residues Ser-317, Ser-318, Asn-319, and Ser-380 each coordinate (2E)-4-hydroxy-3-methylbut-2-enyl diphosphate. Positions 317, 318, 319, and 380 each coordinate dimethylallyl diphosphate. Isopentenyl diphosphate-binding residues include Ser-317, Ser-318, Asn-319, and Ser-380.

It belongs to the IspH family. [4Fe-4S] cluster is required as a cofactor.

The catalysed reaction is isopentenyl diphosphate + 2 oxidized [2Fe-2S]-[ferredoxin] + H2O = (2E)-4-hydroxy-3-methylbut-2-enyl diphosphate + 2 reduced [2Fe-2S]-[ferredoxin] + 2 H(+). It catalyses the reaction dimethylallyl diphosphate + 2 oxidized [2Fe-2S]-[ferredoxin] + H2O = (2E)-4-hydroxy-3-methylbut-2-enyl diphosphate + 2 reduced [2Fe-2S]-[ferredoxin] + 2 H(+). It participates in isoprenoid biosynthesis; dimethylallyl diphosphate biosynthesis; dimethylallyl diphosphate from (2E)-4-hydroxy-3-methylbutenyl diphosphate: step 1/1. It functions in the pathway isoprenoid biosynthesis; isopentenyl diphosphate biosynthesis via DXP pathway; isopentenyl diphosphate from 1-deoxy-D-xylulose 5-phosphate: step 6/6. Its function is as follows. Catalyzes the conversion of 1-hydroxy-2-methyl-2-(E)-butenyl 4-diphosphate (HMBPP) into a mixture of isopentenyl diphosphate (IPP) and dimethylallyl diphosphate (DMAPP). Acts in the terminal step of the DOXP/MEP pathway for isoprenoid precursor biosynthesis. The polypeptide is 4-hydroxy-3-methylbut-2-enyl diphosphate reductase (Prochlorococcus marinus (strain MIT 9301)).